A 32-amino-acid chain; its full sequence is Delta-conotoxin EVIA (32 aa).

Intrachain disulfides connect Cys-3-Cys-21, Cys-10-Cys-25, and Cys-20-Cys-29. Pro-6 is modified (4-hydroxyproline). Leu-32 carries the leucine amide modification.

Belongs to the conotoxin O1 superfamily. As to expression, expressed by the venom duct.

The protein localises to the secreted. Delta-conotoxins bind to site 6 of voltage-gated sodium channels and inhibit the inactivation process. This toxin inhibits sodium channel inactivation in neuronal membranes from amphibians and mammals (Nav1.2a/SCN1A, Nav1.3/SCN3A and Nav1.6/SCN8A) upon binding to receptor site 6. The chain is Delta-conotoxin EVIA from Conus ermineus (Agate cone).